Reading from the N-terminus, the 488-residue chain is Malonate-semialdehyde dehydrogenase (488 aa).

The NAD(+) site is built by Ala150, Phe152, Lys176, Glu179, Arg180, Ser229, and Thr251. The active-site Nucleophile is the Cys284. Glu382 is an NAD(+) binding site.

It belongs to the aldehyde dehydrogenase family. IolA subfamily. In terms of assembly, homotetramer.

It carries out the reaction 3-oxopropanoate + NAD(+) + CoA + H2O = hydrogencarbonate + acetyl-CoA + NADH + H(+). The catalysed reaction is 2-methyl-3-oxopropanoate + NAD(+) + CoA + H2O = propanoyl-CoA + hydrogencarbonate + NADH + H(+). Its pathway is polyol metabolism; myo-inositol degradation into acetyl-CoA; acetyl-CoA from myo-inositol: step 7/7. Catalyzes the oxidation of malonate semialdehyde (MSA) and methylmalonate semialdehyde (MMSA) into acetyl-CoA and propanoyl-CoA, respectively. Is involved in a myo-inositol catabolic pathway. Bicarbonate, and not CO2, is the end-product of the enzymatic reaction. The chain is Malonate-semialdehyde dehydrogenase from Listeria monocytogenes serotype 4b (strain CLIP80459).